Here is a 147-residue protein sequence, read N- to C-terminus: Flagellar assembly factor FliW (147 aa).

This sequence belongs to the FliW family. In terms of assembly, interacts with translational regulator CsrA and flagellin(s).

It localises to the cytoplasm. In terms of biological role, acts as an anti-CsrA protein, binds CsrA and prevents it from repressing translation of its target genes, one of which is flagellin. Binds to flagellin and participates in the assembly of the flagellum. The polypeptide is Flagellar assembly factor FliW (Chromobacterium violaceum (strain ATCC 12472 / DSM 30191 / JCM 1249 / CCUG 213 / NBRC 12614 / NCIMB 9131 / NCTC 9757 / MK)).